A 286-amino-acid chain; its full sequence is Pyridoxal kinase PdxY (286 aa).

Residues serine 9 and 44–45 contribute to the substrate site; that span reads MQ. Residues aspartate 111, glutamate 147, and lysine 180 each coordinate ATP. Residue aspartate 221 coordinates substrate.

Belongs to the pyridoxine kinase family. PdxY subfamily. As to quaternary structure, homodimer. Mg(2+) is required as a cofactor.

It carries out the reaction pyridoxal + ATP = pyridoxal 5'-phosphate + ADP + H(+). It participates in cofactor metabolism; pyridoxal 5'-phosphate salvage; pyridoxal 5'-phosphate from pyridoxal: step 1/1. Pyridoxal kinase involved in the salvage pathway of pyridoxal 5'-phosphate (PLP). Catalyzes the phosphorylation of pyridoxal to PLP. In Burkholderia orbicola (strain AU 1054), this protein is Pyridoxal kinase PdxY.